Consider the following 364-residue polypeptide: Aminomethyltransferase (364 aa).

Belongs to the GcvT family. In terms of assembly, the glycine cleavage system is composed of four proteins: P, T, L and H.

It catalyses the reaction N(6)-[(R)-S(8)-aminomethyldihydrolipoyl]-L-lysyl-[protein] + (6S)-5,6,7,8-tetrahydrofolate = N(6)-[(R)-dihydrolipoyl]-L-lysyl-[protein] + (6R)-5,10-methylene-5,6,7,8-tetrahydrofolate + NH4(+). In terms of biological role, the glycine cleavage system catalyzes the degradation of glycine. This Thermotoga maritima (strain ATCC 43589 / DSM 3109 / JCM 10099 / NBRC 100826 / MSB8) protein is Aminomethyltransferase.